Here is a 193-residue protein sequence, read N- to C-terminus: Ribonuclease HII (193 aa).

The RNase H type-2 domain occupies 15–193 (CIVAGIDEAG…PYHRRSFRCC (179 aa)). A divalent metal cation-binding residues include Asp21, Glu22, and Asp112.

Belongs to the RNase HII family. It depends on Mn(2+) as a cofactor. Requires Mg(2+) as cofactor.

The protein localises to the cytoplasm. It carries out the reaction Endonucleolytic cleavage to 5'-phosphomonoester.. Its function is as follows. Endonuclease that specifically degrades the RNA of RNA-DNA hybrids. The protein is Ribonuclease HII of Rickettsia africae (strain ESF-5).